A 103-amino-acid polypeptide reads, in one-letter code: Nematocin (103 aa).

An N-terminal signal peptide occupies residues 1-19 (MGSSPILLVLAISIGLASA). Cys20 and Cys25 are disulfide-bonded. At Tyr30 the chain carries Tyrosine amide. A propeptide spanning residues 31–103 (GRTIRCSSCG…QGGCQTSAMC (73 aa)) is cleaved from the precursor.

It belongs to the vasopressin/oxytocin family. In terms of tissue distribution, detected in thermosensory AFD neurons, neurosecretory NSM cells, AVK interneurons, pharyngeal neuron M5, and the mechanosensory DVA neuron. Detected in male-specific CP motor neurons.

It localises to the secreted. Functionally, ligand for the G-protein coupled receptor ntr-1. Plays a role in gustatory associative learning. Also plays a role in male mating behavior. The protein is Nematocin of Caenorhabditis elegans.